The following is a 198-amino-acid chain: HTH-type transcriptional regulator BetI (198 aa).

Residues 8 to 68 form the HTH tetR-type domain; the sequence is PLRRRELIDA…ATMRHLLREL (61 aa). The segment at residues 31–50 is a DNA-binding region (H-T-H motif); sequence TVAQIAHEAGVSPALAHHYF.

It participates in amine and polyamine biosynthesis; betaine biosynthesis via choline pathway [regulation]. Functionally, repressor involved in the biosynthesis of the osmoprotectant glycine betaine. It represses transcription of the choline transporter BetT and the genes of BetAB involved in the synthesis of glycine betaine. The protein is HTH-type transcriptional regulator BetI of Brucella canis (strain ATCC 23365 / NCTC 10854 / RM-666).